The chain runs to 312 residues: Src-like-adapter (312 aa).

Positions 1–33 (MLCRLPGPSTSRGEKEMGNSMKSTPAPLERPLS) are disordered. An SH3 domain is found at 38 to 98 (LESDFLAVLN…PGICVARVYH (61 aa)). One can recognise an SH2 domain in the interval 100–191 (WLFEGLGRDK…GLCCVLTTPC (92 aa)). The segment at 206–312 (CTSPGSPVTL…TQKTKALTAT (107 aa)) is SLA C-terminal. The residue at position 274 (serine 274) is a Phosphoserine.

In terms of assembly, homodimer. Interacts with phosphorylated CBL, SYK and LAT. Homodimerization and interaction with phosphorylated CBL occurs via its C-terminal domain. Interacts with PDGFRB and EPHA2. Interacts with phosphorylated proteins ZAP70; CD3Z; VAV1 and LCP2 via its SH2 domain. Phosphorylated.

It is found in the cytoplasm. The protein resides in the endosome. Adapter protein, which negatively regulates T-cell receptor (TCR) signaling. Inhibits T-cell antigen-receptor induced activation of nuclear factor of activated T-cells. Involved in the negative regulation of positive selection and mitosis of T-cells. May act by linking signaling proteins such as ZAP70 with CBL, leading to a CBL dependent degradation of signaling proteins. The sequence is that of Src-like-adapter (Sla) from Rattus norvegicus (Rat).